Here is a 1564-residue protein sequence, read N- to C-terminus: ATP-dependent permease PDR10 (1564 aa).

Over residues 1–16 the composition is skewed to polar residues; that stretch reads MLQAPSSSNSGLNQGN. The interval 1-37 is disordered; the sequence is MLQAPSSSNSGLNQGNAAPDGPPNETQPYEGLDAAAQ. The Cytoplasmic portion of the chain corresponds to 1 to 587; it reads MLQAPSSSNS…AAIFFAILFN (587 aa). The 257-residue stretch at 174–430 folds into the ABC transporter 1 domain; that stretch reads ISRRLFHRTH…FQRMGYVCPE (257 aa). 5 consecutive transmembrane segments (helical) span residues 588 to 608, 624 to 644, 674 to 694, 699 to 719, and 732 to 752; these read AFSS…TEKH, TFSD…PYYF, RCIG…SVLL, MYTG…WISY, and INEF…GPNY. An N-linked (GlcNAc...) asparagine glycan is attached at Asn754. The span at 839-849 shows a compositional bias: basic residues; sequence KGIVSEKKKKN. The disordered stretch occupies residues 839 to 872; it reads KGIVSEKKKKNQPTLSTSDAEKDVEMNNNSSATD. Residues 841–861 form a helical membrane-spanning segment; sequence IVSEKKKKNQPTLSTSDAEKD. At 862–1304 the chain is on the cytoplasmic side; the sequence is VEMNNNSSAT…IFMFTVVFNP (443 aa). Residues 923 to 1166 enclose the ABC transporter 2 domain; that stretch reads FHWKNLCYDI…MINYFEAHGA (244 aa). Residue 959 to 966 participates in ATP binding; sequence GASGAGKT. Helical transmembrane passes span 1305-1325, 1340-1360, 1390-1410, 1426-1446, 1459-1479, and 1491-1511; these read ILQQ…ARER, ILVE…VYYY, VYIS…ENAA, VLAT…VSPL, ANAS…PSGM, and STGT…FCQF. Over 1512–1564 the chain is Cytoplasmic; sequence SSTNDYLATVSSSYSRRWMNYGIFSAYIVFDYCAAIFLYWLVRVPKKSKKLKK.

This sequence belongs to the ABC transporter superfamily. ABCG family. PDR (TC 3.A.1.205) subfamily.

It is found in the membrane. This Saccharomyces cerevisiae (strain ATCC 204508 / S288c) (Baker's yeast) protein is ATP-dependent permease PDR10 (PDR10).